Here is a 224-residue protein sequence, read N- to C-terminus: Ribosomal RNA large subunit methyltransferase E (224 aa).

5 residues coordinate S-adenosyl-L-methionine: glycine 64, tryptophan 66, aspartate 97, aspartate 113, and aspartate 138. Lysine 178 serves as the catalytic Proton acceptor.

Belongs to the class I-like SAM-binding methyltransferase superfamily. RNA methyltransferase RlmE family.

It is found in the cytoplasm. The catalysed reaction is uridine(2552) in 23S rRNA + S-adenosyl-L-methionine = 2'-O-methyluridine(2552) in 23S rRNA + S-adenosyl-L-homocysteine + H(+). Functionally, specifically methylates the uridine in position 2552 of 23S rRNA at the 2'-O position of the ribose in the fully assembled 50S ribosomal subunit. In Albidiferax ferrireducens (strain ATCC BAA-621 / DSM 15236 / T118) (Rhodoferax ferrireducens), this protein is Ribosomal RNA large subunit methyltransferase E.